The sequence spans 264 residues: Thymidylate synthase (264 aa).

Arg21 contacts dUMP. Residue His51 participates in (6R)-5,10-methylene-5,6,7,8-tetrahydrofolate binding. 126 to 127 (RR) provides a ligand contact to dUMP. The Nucleophile role is filled by Cys146. Residues 166–169 (RSAD), Asn177, and 207–209 (HIY) each bind dUMP. Asp169 serves as a coordination point for (6R)-5,10-methylene-5,6,7,8-tetrahydrofolate. Ser263 is a binding site for (6R)-5,10-methylene-5,6,7,8-tetrahydrofolate.

The protein belongs to the thymidylate synthase family. Bacterial-type ThyA subfamily. Homodimer.

The protein localises to the cytoplasm. It catalyses the reaction dUMP + (6R)-5,10-methylene-5,6,7,8-tetrahydrofolate = 7,8-dihydrofolate + dTMP. It participates in pyrimidine metabolism; dTTP biosynthesis. Its function is as follows. Catalyzes the reductive methylation of 2'-deoxyuridine-5'-monophosphate (dUMP) to 2'-deoxythymidine-5'-monophosphate (dTMP) while utilizing 5,10-methylenetetrahydrofolate (mTHF) as the methyl donor and reductant in the reaction, yielding dihydrofolate (DHF) as a by-product. This enzymatic reaction provides an intracellular de novo source of dTMP, an essential precursor for DNA biosynthesis. The sequence is that of Thymidylate synthase from Bacillus pumilus (strain SAFR-032).